The sequence spans 1935 residues: Myosin-7 (1935 aa).

In terms of domain architecture, Myosin N-terminal SH3-like spans 32-81 (DLKKDVFVPDDKQEFVKAKIVSREGGKVTAETEYGKTVTVKEDQVMQQNP). Residues 85–778 (DKIEDMAMLT…LLGLLEEMRD (694 aa)) enclose the Myosin motor domain. An N6,N6,N6-trimethyllysine modification is found at lysine 129. 178-185 (GESGAGKT) is an ATP binding site. At threonine 378 the chain carries Phosphothreonine. Actin-binding stretches follow at residues 655–677 (LNKL…IPNE) and 757–771 (KFGH…GLLG). The IQ domain maps to 781 to 810 (LSRIITRIQAQSRGVLARMEYKKLLERRDS). Positions 839–1935 (LLKSAEREKE…DIGTKGLNEE (1097 aa)) form a coiled coil. Serine 1137 and serine 1269 each carry phosphoserine. Residue threonine 1282 is modified to Phosphothreonine. Residue tyrosine 1308 is modified to Phosphotyrosine. Residue threonine 1309 is modified to Phosphothreonine. At serine 1510 the chain carries Phosphoserine. Threonine 1513 carries the phosphothreonine modification. Residues 1907 to 1935 (EERADIAESQVNKLRAKSRDIGTKGLNEE) are disordered. Residues 1923 to 1935 (KSRDIGTKGLNEE) are compositionally biased toward basic and acidic residues.

The protein belongs to the TRAFAC class myosin-kinesin ATPase superfamily. Myosin family. As to quaternary structure, muscle myosin is a hexameric protein that consists of 2 heavy chain subunits (MHC), 2 alkali light chain subunits (MLC) and 2 regulatory light chain subunits (MLC-2). Interacts with ECPAS. Interacts (via C-terminus) with LRRC39. Both wild type and variant Gln-403 are detected in skeletal muscle (at protein level).

It localises to the cytoplasm. The protein localises to the myofibril. It is found in the sarcomere. In terms of biological role, myosins are actin-based motor molecules with ATPase activity essential for muscle contraction. Forms regular bipolar thick filaments that, together with actin thin filaments, constitute the fundamental contractile unit of skeletal and cardiac muscle. In Homo sapiens (Human), this protein is Myosin-7 (MYH7).